The sequence spans 1367 residues: Collagen alpha-1(XV) chain (1367 aa).

The N-terminal stretch at 1–31 is a signal peptide; the sequence is MTHRRTAQGRRPRWLLSIISALLSAVLQTRA. Residues 54–249 enclose the Laminin G-like domain; sequence SVSFTTGYGG…SSASGEASGF (196 aa). The segment at 229-604 is nonhelical region 1 (NC1); it reads RTPEELCEAQ…DIVGNEDLLR (376 aa). Residues Ser-243 and Ser-247 are each glycosylated (O-linked (Xyl...) (chondroitin sulfate) serine). The interval 267 to 319 is disordered; that stretch reads APPKESHVDPISVPPTSSSPAEDSELSGEPVPEGTPETNLSIIGHSSPEQGSG. Asn-305 and Asn-323 each carry an N-linked (GlcNAc...) asparagine glycan. An O-linked (Xyl...) (chondroitin sulfate) serine glycan is attached at Ser-341. Residues Asn-348, Asn-375, and Asn-402 are each glycosylated (N-linked (GlcNAc...) asparagine). Disordered regions lie at residues 396 to 446 and 529 to 784; these read DTPD…SHGE and TAEP…GHVE. A compositionally biased stretch (polar residues) spans 402-429; sequence NLTTTASGDGEVPTSTDGDTEADSSPTG. Basic and acidic residues predominate over residues 434-446; it reads KPREEATLGSHGE. Over residues 555–564 the composition is skewed to pro residues; the sequence is PSGPPLPTPT. Over residues 582-595 the composition is skewed to gly residues; that stretch reads GPVGGLDEGSGSGD. Collagen-like domains lie at 605-665 and 666-717; these read GPPG…GMKG and EKGA…PPGP. A triple-helical region 1 (COL1) region spans residues 605-718; that stretch reads GPPGPPGPPG…PGPPGPPGPG (114 aa). Residues 606–616 are compositionally biased toward pro residues; it reads PPGPPGPPGSP. An N-linked (GlcNAc...) asparagine glycan is attached at Asn-673. Residues 703–717 show a composition bias toward pro residues; that stretch reads MGPPGPPGPPGPPGP. The tract at residues 719-748 is nonhelical region 2 (NC2); it reads CTTELGFEIEGSGDVRLLSKPTISGPTSPS. Ser-730 is a glycosylation site (O-linked (Xyl...) (chondroitin sulfate) serine). Positions 737 to 750 are enriched in low complexity; it reads SKPTISGPTSPSGP. The segment at 749-783 is triple-helical region 2 (COL2); that stretch reads GPKGEKGEQGAKGERGADGTSTMGPPGPRGPPGHV. Over residues 751–765 the composition is skewed to basic and acidic residues; the sequence is KGEKGEQGAKGERGA. The interval 784-807 is nonhelical region 3 (NC3); it reads EVLSSSLINITNGSMNFSDIPELM. Residues Asn-792, Asn-795, and Asn-799 are each glycosylated (N-linked (GlcNAc...) asparagine). Collagen-like domains follow at residues 808–850 and 863–912; these read GPPG…GEPG and KGRK…GDRG. Positions 808 to 852 are triple-helical region 3 (COL3); the sequence is GPPGPDGVPGLPGFPGPRGPKGDTGVPGFPGLKGEQGEKGEPGAI. The nonhelical region 4 (NC4) stretch occupies residues 853–863; the sequence is LTGDVPLEMMK. The interval 864 to 934 is triple-helical region 4 (COL4); the sequence is GRKGEPGIHG…PGPPGPPGAV (71 aa). Positions 905-930 are disordered; it reads KGAKGDRGVTLPGPPGLPGPPGPPGP. The segment covering 916–930 has biased composition (pro residues); it reads PGPPGLPGPPGPPGP. The interval 935 to 968 is nonhelical region 5 (NC5); sequence VNIKGAVFPIPARPHCKTPVGTAHPGDPELVTFH. The triple-helical region 5 (COL5) stretch occupies residues 969-998; sequence GVKGEKGSWGLPGSKGEKGDQGAQGPPGPP. Disordered regions lie at residues 974 to 1000 and 1055 to 1089; these read KGSWGLPGSKGEKGDQGAQGPPGPPVD and GPPGIPGLPGPPGFGRPGVPGPPGPPGPPGPPAIL. A nonhelical region 6 (NC6) region spans residues 999–1031; the sequence is VDPAYLRHFLNSLKGENEDASFRGESSNNLFVS. A triple-helical region 6 (COL6) region spans residues 1032-1086; the sequence is GPPGLPGYPGLVGQKGEAVVGPQGPPGIPGLPGPPGFGRPGVPGPPGPPGPPGPP. The segment covering 1055 to 1086 has biased composition (pro residues); sequence GPPGIPGLPGPPGFGRPGVPGPPGPPGPPGPP. The nonhelical region 7 (NC7) stretch occupies residues 1087–1096; that stretch reads AILGAAVALP. Residues 1097 to 1111 form a triple-helical region 7 (COL7) region; that stretch reads GPPGPPGQPGLPGSR. The interval 1112-1367 is nonhelical region 8 (NC8); sequence NLVTALSDMG…ENSFMTDTRK (256 aa). 2 disulfides stabilise this stretch: Cys-1216/Cys-1356 and Cys-1318/Cys-1348.

It belongs to the multiplexin collagen family. In terms of assembly, trimer; disulfide-linked. Interacts moderately with EFEMP2. Prolines at the third position of the tripeptide repeating unit (G-X-Y) are hydroxylated in some or all of the chains. In terms of processing, O-glycosylated; contains chondroitin sulfate. Detected in testis, brain, heart, kidney, skeletal muscle and skin (at protein level). Detected in heart and skeletal muscle.

It localises to the secreted. The protein localises to the extracellular space. It is found in the extracellular matrix. Functionally, structural protein that stabilizes microvessels and muscle cells, both in heart and in skeletal muscle. In terms of biological role, restin potently inhibits angiogenesis. This chain is Collagen alpha-1(XV) chain (Col15a1), found in Mus musculus (Mouse).